Consider the following 136-residue polypeptide: MQTTKALLISPVLIRSCTRGLIRPVSASLLSRPEAPSKKPSCCSSPLQVARREFQTSVISRDIDTAAKFIGAGAATVGVAGSGAGIGTVFGSLIIGYARNPSLKQQLFSYAILGFALSEAMGLFCLMVAFLILFAM.

Residues 1-61 constitute a mitochondrion transit peptide; sequence MQTTKALLIS…REFQTSVISR (61 aa). A helical membrane pass occupies residues 77–97; the sequence is VGVAGSGAGIGTVFGSLIIGY. N6,N6,N6-trimethyllysine is present on lysine 104. A helical membrane pass occupies residues 112–132; the sequence is ILGFALSEAMGLFCLMVAFLI.

This sequence belongs to the ATPase C chain family. As to quaternary structure, homooctamer; the c-ring consists of eight c subunits forming a circle, and each subunit adopts a hairpin shape. Component of the ATP synthase complex composed at least of ATP5F1A/subunit alpha, ATP5F1B/subunit beta, ATP5MC1/subunit c (homooctomer), MT-ATP6/subunit a, MT-ATP8/subunit 8, ATP5ME/subunit e, ATP5MF/subunit f, ATP5MG/subunit g, ATP5MK/subunit k, ATP5MJ/subunit j, ATP5F1C/subunit gamma, ATP5F1D/subunit delta, ATP5F1E/subunit epsilon, ATP5PF/subunit F6, ATP5PB/subunit b, ATP5PD/subunit d, ATP5PO/subunit OSCP. ATP synthase complex consists of a soluble F(1) head domain (subunits alpha(3) and beta(3)) - the catalytic core - and a membrane F(0) domain - the membrane proton channel (subunits c, a, 8, e, f, g, k and j). These two domains are linked by a central stalk (subunits gamma, delta, and epsilon) rotating inside the F1 region and a stationary peripheral stalk (subunits F6, b, d, and OSCP). Interacts with TMEM70 (homooligomer form); this interaction facilitates the oligomer formation of subunit c/ATP5MC1 (c-ring) and the c-ring membrane insertion and also protects ATP5MC1 against intramitochondrial proteolysis. Post-translationally, trimethylated by ATPSCKMT at Lys-104. Methylation is required for proper incorporation of the C subunit into the ATP synthase complex and mitochondrial respiration.

The protein resides in the mitochondrion membrane. The catalysed reaction is H(+)(in) = H(+)(out). Subunit c, of the mitochondrial membrane ATP synthase complex (F(1)F(0) ATP synthase or Complex V) that produces ATP from ADP in the presence of a proton gradient across the membrane which is generated by electron transport complexes of the respiratory chain. ATP synthase complex consist of a soluble F(1) head domain - the catalytic core - and a membrane F(1) domain - the membrane proton channel. These two domains are linked by a central stalk rotating inside the F(1) region and a stationary peripheral stalk. During catalysis, ATP synthesis in the catalytic domain of F(1) is coupled via a rotary mechanism of the central stalk subunits to proton translocation. With the subunit a (MT-ATP6), forms the proton-conducting channel in the F(0) domain, that contains two crucial half-channels (inlet and outlet) that facilitate proton movement from the mitochondrial intermembrane space (IMS) into the matrix. Protons are taken up via the inlet half-channel and released through the outlet half-channel, following a Grotthuss mechanism. This chain is ATP synthase F(0) complex subunit C1, mitochondrial, found in Rattus norvegicus (Rat).